A 622-amino-acid polypeptide reads, in one-letter code: Chaperone protein HscA homolog (622 aa).

It belongs to the heat shock protein 70 family.

In terms of biological role, chaperone involved in the maturation of iron-sulfur cluster-containing proteins. Has a low intrinsic ATPase activity which is markedly stimulated by HscB. This Acidovorax sp. (strain JS42) protein is Chaperone protein HscA homolog.